A 552-amino-acid polypeptide reads, in one-letter code: MAKFHAPVIQDNPSGWGPCAVPEKFKDMPYQPFSKGDRLGKVADWTGATYQDKRYTNKYSSQFGGGSQYAYFHEEDEASFQLVDTAKTQKTAYQRNRMRFAQRNLRRDKDRRTLTQFNMQTLPKSAKQKERDRMRLQKKFQKQFGVRQKWDQKSQAQLKPRDSSVEVRSDWEVKEEMDFPRLMKMRYMDVADPLDIECCGALEHYDKAFDRITTRNEKPLKSIKRIFHTVTTTDDPVIRKLAKTQGNVFATDAILATLMCCTRSVNSWDIIVQRVGNKLFFDKRDNSDFDLLTVSETANEPPQDEGSSLNSPRNLAMEATYINHNFSQQCLRMGGERYKFPNPNPFVEEDTEKSEVASVAYRYRRWKLGEDIDLIVRCEHDGVMTGANGEVSFINVKTLNEWDSRYCNGVDWRQKLDSQRGAVLATELKNNSYKLARWTCCAILAGSEYLKLGYVSRYHVKDSSRHVVLGTQQFKPNEFASQINLSMENAWGILRCVIDICRKLEEGKYLILKDPNKQVIRVYSLPDGTFSSDEDEEEDDEDEEDEEEDEDN.

Positions 288 to 302 (DFDLLTVSETANEPP) are RNA gate. Residues 525-552 (LPDGTFSSDEDEEEDDEDEEDEEEDEDN) form a disordered region. Over residues 532–552 (SDEDEEEDDEDEEDEEEDEDN) the composition is skewed to acidic residues.

Belongs to the eIF-3 subunit D family. As to quaternary structure, component of the eukaryotic translation initiation factor 3 (eIF-3) complex, which is composed of 13 subunits: eif3a, eif3b, eif3c, eif3d, eif3e, eif3f, eif3g, eif3h, eif3i, eif3j, eif3k, eif3l and eif3m.

It is found in the cytoplasm. Functionally, mRNA cap-binding component of the eukaryotic translation initiation factor 3 (eIF-3) complex, which is involved in protein synthesis of a specialized repertoire of mRNAs and, together with other initiation factors, stimulates binding of mRNA and methionyl-tRNAi to the 40S ribosome. The eIF-3 complex specifically targets and initiates translation of a subset of mRNAs involved in cell proliferation. In the eIF-3 complex, eif3d specifically recognizes and binds the 7-methylguanosine cap of a subset of mRNAs. This Danio rerio (Zebrafish) protein is Eukaryotic translation initiation factor 3 subunit D (eif3d).